Here is a 488-residue protein sequence, read N- to C-terminus: Transcriptional coactivator YAP1 (488 aa).

The segment covering 1-21 (MEPAQQPPPQPAPQGPAPPSV) has biased composition (pro residues). Residues 1 to 47 (MEPAQQPPPQPAPQGPAPPSVSPAGTPAAPPAPPAGHQVVHVRGDSE) form a disordered region. Serine 46 is subject to Phosphoserine. A Phosphothreonine modification is found at threonine 48. Residues 71 to 85 (MRLRKLPDSFFKPPE) adopt a coiled-coil conformation. Residue lysine 75 is modified to N6-lactoyllysine. The disordered stretch occupies residues 76–99 (LPDSFFKPPEPKSHSRQASTDAGT). Phosphoserine is present on residues serine 90 and serine 94. Threonine 95 carries the post-translational modification Phosphothreonine. At threonine 104 the chain carries Phosphothreonine; by MAPK8 and MAPK9. 4 positions are modified to phosphoserine: serine 112, serine 113, serine 116, and serine 123. Serine 149 is subject to Phosphoserine; by LATS1 and LATS2. WW domains lie at 156 to 189 (VPLP…DPRK) and 215 to 248 (GPLP…DPRL). Disordered stretches follow at residues 261 to 293 (SAPV…QIQL) and 339 to 393 (TLEQ…SSYS). Serine 274 carries the post-translational modification Phosphoserine. The segment at 276-488 (QGGVLGGGSS…LDKESFLTWL (213 aa)) is transactivation domain. Residues 283 to 344 (GSSNQQQQIQ…SQLPTLEQDG (62 aa)) adopt a coiled-coil conformation. A compositionally biased stretch (polar residues) spans 348–376 (NAVSSPGMSQELRTMTTNSSDPFLNSGTY). A Phosphoserine; by MAPK8 and MAPK9 modification is found at serine 352. Phosphoserine occurs at positions 356, 366, 367, and 373. Serine 382 carries the phosphoserine; by LATS1 and LATS2 modification. A compositionally biased stretch (polar residues) spans 384-393 (DSGLSMSSYS). Phosphoserine; by CK1 is present on residues serine 385 and serine 388. Position 392 is a phosphotyrosine; by ABL1 (tyrosine 392). The residue at position 397 (threonine 397) is a Phosphothreonine; by MAPK8 and MAPK9.

The protein belongs to the YAP1 family. Part of a complex when phosphorylated that contains DSG3, PKP1, YAP1 and YWHAG; the complex is required for localization of DSG3 and YAP1 to the cell membrane in keratinocytes. Binds to the SH3 domain of the YES kinase. Binds to WBP1 and WBP2. Binds, in vitro, through the WW1 domain, to neural isoforms of ENAH that contain the PPSY motif. The phosphorylated form interacts with YWHAB. Interacts (via WW domains) with LATS1 (via PPxY motif 2). Interacts with LATS2. Interacts (via WW domain 1) with isoform JM-A of ERBB4 (via PPxY motif 2). Interacts with TEAD1, TEAD2 and TEAD3. Interacts with TP73 and HCK. Interacts with RUNX1. Interacts with TEAD4. Interacts (via WW domains) with PTPN14 (via PPxY motif 2); this interaction leads to the cytoplasmic sequestration of YAP1 and inhibits its transcriptional coactivator activity. Interacts (when phosphorylated at Ser-112) with SMAD2, SMAD3 and WWTR1. Interacts with PRRG2 (via cytoplasmic domain). Interacts (via WW domains) with PRRG4 (via cytoplasmic domain). Interacts (phosphorylated) with CLDN18; the interaction sequesters YAP1 away from the nucleus and thereby restricts transcription of YAP1 target genes. Interacts with SMAD1. Interacts with AMOT; the interaction facilitates translocation of YAP1 to the cytoplasm and tight junctions. Interacts with AMOTL2, the interaction is required for ubiquitination of AMOTL2 and localization of YAP1 to tight junctions. In terms of processing, phosphorylated by LATS1 and LATS2; leading to cytoplasmic translocation and inactivation. Phosphorylated by ABL1; leading to YAP1 stabilization, enhanced interaction with TP73 and recruitment onto proapoptotic genes; in response to DNA damage. Phosphorylation at Ser-385 and Ser-388 by CK1 is triggered by previous phosphorylation at Ser-382 by LATS proteins and leads to YAP1 ubiquitination by SCF(beta-TRCP) E3 ubiquitin ligase and subsequent degradation. Phosphorylated at Thr-104, Ser-123, Ser-352 and Thr-397 by MAPK8/JNK1 and MAPK9/JNK2, which is required for the regulation of apoptosis by YAP1. Post-translationally, lactylation by AARS1 promotes nuclear localization and stabilization of YAP1, leading to increased Hippo signaling pathway. Delactylated by SIRT1. Ubiquitinated by SCF(beta-TRCP) E3 ubiquitin ligase. As to expression, isoforms lacking the transactivation domain seen in striatal neurons (at protein level). Ubiquitous. Isoform 2 is expressed at higher levels in the neural tissues. In the embryo, it is expressed in brain, eye, and the maxillary and frontonasal components of the primary palate.

It is found in the cytoplasm. The protein localises to the nucleus. It localises to the cell junction. Its subcellular location is the tight junction. The protein resides in the cell membrane. Its function is as follows. Transcriptional regulator with dual roles as a coactivator and corepressor. Critical downstream regulatory target in the Hippo signaling pathway, crucial for organ size control and tumor suppression by restricting proliferation and promoting apoptosis. The Hippo signaling pathway core involves a kinase cascade featuring STK3/MST2 and STK4/MST1, along with its regulatory partner SAV1, which phosphorylates and activates LATS1/2 in complex with their regulatory protein, MOB1. This activation leads to the phosphorylation and inactivation of the YAP1 oncoprotein and WWTR1/TAZ. Phosphorylation of YAP1 by LATS1/2 prevents its nuclear translocation, thereby regulating the expression of its target genes. The transcriptional regulation of gene expression requires TEAD transcription factors and modulates cell growth, anchorage-independent growth, and induction of epithelial-mesenchymal transition (EMT). Plays a key role in tissue tension and 3D tissue shape by regulating the cortical actomyosin network, acting via ARHGAP18, a Rho GTPase activating protein that suppresses F-actin polymerization. It also suppresses ciliogenesis by acting as a transcriptional corepressor of TEAD4 target genes AURKA and PLK1. In conjunction with WWTR1, regulates TGFB1-dependent SMAD2 and SMAD3 nuclear accumulation. Synergizes with WBP2 to enhance PGR activity. The protein is Transcriptional coactivator YAP1 (Yap1) of Mus musculus (Mouse).